An 85-amino-acid chain; its full sequence is Toxin BmKaIT1 (85 aa).

Positions 1–19 (MNYLVMISFAFLLMTGVES) are cleaved as a signal peptide. Residues 21-83 (RDAYIAQNYN…VPIRVPGKCH (63 aa)) form the LCN-type CS-alpha/beta domain. Intrachain disulfides connect cysteine 31–cysteine 82, cysteine 35–cysteine 55, cysteine 41–cysteine 65, and cysteine 45–cysteine 67. The propeptide at 84–85 (RR) is removed by a carboxypeptidase.

It belongs to the long (4 C-C) scorpion toxin superfamily. Sodium channel inhibitor family. Alpha subfamily. In terms of tissue distribution, expressed by the venom gland.

Its subcellular location is the secreted. Alpha toxins bind voltage-independently at site-3 of sodium channels (Nav) and inhibit the inactivation of the activated channels, thereby blocking neuronal transmission. Shows a high toxicity toward insects and moderate toxicity against mammals. This Olivierus martensii (Manchurian scorpion) protein is Toxin BmKaIT1.